We begin with the raw amino-acid sequence, 491 residues long: Glutamyl-tRNA(Gln) amidotransferase subunit A (491 aa).

Residues K79 and S154 each act as charge relay system in the active site. S178 acts as the Acyl-ester intermediate in catalysis.

It belongs to the amidase family. GatA subfamily. As to quaternary structure, heterotrimer of A, B and C subunits.

It catalyses the reaction L-glutamyl-tRNA(Gln) + L-glutamine + ATP + H2O = L-glutaminyl-tRNA(Gln) + L-glutamate + ADP + phosphate + H(+). Functionally, allows the formation of correctly charged Gln-tRNA(Gln) through the transamidation of misacylated Glu-tRNA(Gln) in organisms which lack glutaminyl-tRNA synthetase. The reaction takes place in the presence of glutamine and ATP through an activated gamma-phospho-Glu-tRNA(Gln). The protein is Glutamyl-tRNA(Gln) amidotransferase subunit A of Alkaliphilus metalliredigens (strain QYMF).